The following is a 94-amino-acid chain: ESAT-6-like protein EsxL (94 aa).

Belongs to the WXG100 family. ESAT-6 subfamily. In terms of assembly, strongly interacts with EsxK to form a heterodimeric complex under reducing conditions.

The protein resides in the secreted. This is ESAT-6-like protein EsxL from Mycobacterium tuberculosis (strain CDC 1551 / Oshkosh).